The primary structure comprises 554 residues: Phosphomethylpyrimidine synthase (554 aa).

Residues asparagine 191, methionine 220, tyrosine 249, histidine 285, 305–307 (SRG), 346–349 (DGLR), and glutamate 385 each bind substrate. Residue histidine 389 participates in Zn(2+) binding. Tyrosine 412 contacts substrate. A Zn(2+)-binding site is contributed by histidine 453. Residues cysteine 533, cysteine 536, and cysteine 541 each contribute to the [4Fe-4S] cluster site.

Belongs to the ThiC family. In terms of assembly, homodimer. [4Fe-4S] cluster is required as a cofactor.

It catalyses the reaction 5-amino-1-(5-phospho-beta-D-ribosyl)imidazole + S-adenosyl-L-methionine = 4-amino-2-methyl-5-(phosphooxymethyl)pyrimidine + CO + 5'-deoxyadenosine + formate + L-methionine + 3 H(+). Its pathway is cofactor biosynthesis; thiamine diphosphate biosynthesis. Catalyzes the synthesis of the hydroxymethylpyrimidine phosphate (HMP-P) moiety of thiamine from aminoimidazole ribotide (AIR) in a radical S-adenosyl-L-methionine (SAM)-dependent reaction. This is Phosphomethylpyrimidine synthase from Ehrlichia chaffeensis (strain ATCC CRL-10679 / Arkansas).